The chain runs to 150 residues: C-type lectin mosGCTL-7 (150 aa).

An N-terminal signal peptide occupies residues 1 to 17 (MQLVHVLVVLLSVVAHA). The C-type lectin domain maps to 18–140 (KKFFIPNLKA…CRGFKAYIVC (123 aa)). A glycan (N-linked (GlcNAc...) asparagine) is linked at asparagine 67. Cysteines 111 and 131 form a disulfide.

As to quaternary structure, interacts with putative receptor-type tyrosine-protein phosphatase mosPTP-1; the interaction probably mediates the recruitment of Japanese encephalitis virus particles in complex with C-type lectin mosGCTL-7 to the cell surface. In terms of assembly, (Microbial infection) Interacts with envelope protein E (glycosylated) of Japanese encephalitis virus in a calcium-dependent manner.

The protein localises to the secreted. Its function is as follows. Carbohydrate-binding protein. In terms of biological role, (Microbial infection) Facilitates Japanese encephalitis virus infection in mosquitoes probably via capturing viral particles and presenting them to a ligand on the cell surface, thereby facilitating viral entry. The protein is C-type lectin mosGCTL-7 of Aedes aegypti (Yellowfever mosquito).